A 482-amino-acid chain; its full sequence is tRNA sulfurtransferase (482 aa).

Residues 61–165 (VQICDALTRI…QDVLILVKAR (105 aa)) form the THUMP domain. ATP is bound by residues 183-184 (LI), Lys265, Gly287, and Gln296. Cys344 and Cys456 form a disulfide bridge. Residues 404-482 (FAPTDVLLDI…GFDNVKVYRP (79 aa)) enclose the Rhodanese domain. The active-site Cysteine persulfide intermediate is the Cys456.

The protein belongs to the ThiI family.

The protein localises to the cytoplasm. The enzyme catalyses [ThiI sulfur-carrier protein]-S-sulfanyl-L-cysteine + a uridine in tRNA + 2 reduced [2Fe-2S]-[ferredoxin] + ATP + H(+) = [ThiI sulfur-carrier protein]-L-cysteine + a 4-thiouridine in tRNA + 2 oxidized [2Fe-2S]-[ferredoxin] + AMP + diphosphate. It catalyses the reaction [ThiS sulfur-carrier protein]-C-terminal Gly-Gly-AMP + S-sulfanyl-L-cysteinyl-[cysteine desulfurase] + AH2 = [ThiS sulfur-carrier protein]-C-terminal-Gly-aminoethanethioate + L-cysteinyl-[cysteine desulfurase] + A + AMP + 2 H(+). Its pathway is cofactor biosynthesis; thiamine diphosphate biosynthesis. Its function is as follows. Catalyzes the ATP-dependent transfer of a sulfur to tRNA to produce 4-thiouridine in position 8 of tRNAs, which functions as a near-UV photosensor. Also catalyzes the transfer of sulfur to the sulfur carrier protein ThiS, forming ThiS-thiocarboxylate. This is a step in the synthesis of thiazole, in the thiamine biosynthesis pathway. The sulfur is donated as persulfide by IscS. The sequence is that of tRNA sulfurtransferase from Photorhabdus laumondii subsp. laumondii (strain DSM 15139 / CIP 105565 / TT01) (Photorhabdus luminescens subsp. laumondii).